Here is a 320-residue protein sequence, read N- to C-terminus: Solute carrier family 25 member 33 (320 aa).

Solcar repeat units lie at residues 9-118, 126-213, and 231-315; these read ENTL…AKEQ, NSNT…LKKC, and SGFF…IVYL. A run of 6 helical transmembrane segments spans residues 12-32, 49-65, 121-141, 190-210, 233-253, and 298-318; these read LLHL…TCPL, VYYP…AGMV, GIFV…AAFV, LTAS…YESL, FFGL…IAYP, and QIPN…LLGE.

This sequence belongs to the mitochondrial carrier (TC 2.A.29) family.

It is found in the mitochondrion inner membrane. The enzyme catalyses UTP(in) + UDP(out) = UTP(out) + UDP(in). The catalysed reaction is dUTP(out) + UTP(in) = dUTP(in) + UTP(out). It carries out the reaction 5-methyl-UTP(out) + UTP(in) = 5-methyl-UTP(in) + UTP(out). It catalyses the reaction 5-methyl-UDP(out) + UTP(in) = 5-methyl-UDP(in) + UTP(out). The enzyme catalyses UTP(in) + CTP(out) = UTP(out) + CTP(in). The catalysed reaction is CDP(out) + UTP(in) = CDP(in) + UTP(out). It carries out the reaction dCTP(out) + UTP(in) = dCTP(in) + UTP(out). It catalyses the reaction dCDP(out) + UTP(in) = dCDP(in) + UTP(out). The enzyme catalyses UTP(in) + GTP(out) = UTP(out) + GTP(in). The catalysed reaction is UTP(in) + GDP(out) = UTP(out) + GDP(in). It carries out the reaction dGTP(out) + UTP(in) = dGTP(in) + UTP(out). It catalyses the reaction dGDP(out) + UTP(in) = dGDP(in) + UTP(out). The enzyme catalyses ITP(out) + UTP(in) = ITP(in) + UTP(out). Mitochondrial transporter that imports/exports pyrimidine nucleotides into and from mitochondria. Selectively transports uridine, thymidine, guanosine, cytosine and inosine (deoxy)nucleoside di- and triphosphates by an antiport mechanism. May import (deoxy)nucleoside triphosphates in exchange for intramitochondrial (deoxy)nucleoside diphosphates, thus providing precursors necessary for de novo synthesis of mitochondrial DNA and RNA while exporting products of their catabolism. Participates in mitochondrial genome maintenance, regulation of mitochondrial membrane potential and mitochondrial respiration. Upon INS or IGF1 stimulation regulates cell growth and proliferation by controlling mitochondrial DNA replication and transcription, the ratio of mitochondria-to nuclear-encoded components of the electron transport chain resulting in control of mitochondrial ROS production. Participates in dendritic cell endocytosis and may associate with mitochondrial oxidative phosphorylation. In Mus musculus (Mouse), this protein is Solute carrier family 25 member 33 (Slc25a33).